The sequence spans 76 residues: MSKFFRRRKFCKFTAEGIKEIDYKDLNTLRQYLTENGKIVPSRVTGTKSKYQRQLTTAVKRARFLALIPYTDNHDI.

The protein belongs to the bacterial ribosomal protein bS18 family. Part of the 30S ribosomal subunit. Forms a tight heterodimer with protein bS6.

Its function is as follows. Binds as a heterodimer with protein bS6 to the central domain of the 16S rRNA, where it helps stabilize the platform of the 30S subunit. This chain is Small ribosomal subunit protein bS18, found in Xylella fastidiosa (strain 9a5c).